Here is a 213-residue protein sequence, read N- to C-terminus: MIGMLTGRVAALGADELVLDVSGVGYLVGAGARTLSRLEPDQDIVLHIETHVREDAFKLYGFLDDIDRAWFVHLQNIQGVGAKAAFAILDTVPVSEIANAAALGDKSTFARAKGVGPKLATRIATELKDKAPPTGRSFSIGLPVHSDDGTTGGAPVAPAGGDSLAREDAVSALVNLGYNESQARQAVAKILRDADSEAPLGDVIRLSLKELAA.

The segment at 1-63 (MIGMLTGRVA…EDAFKLYGFL (63 aa)) is domain I. Positions 64–142 (DDIDRAWFVH…PTGRSFSIGL (79 aa)) are domain II. Residues 143–160 (PVHSDDGTTGGAPVAPAG) are flexible linker. The interval 161–213 (GDSLAREDAVSALVNLGYNESQARQAVAKILRDADSEAPLGDVIRLSLKELAA) is domain III.

The protein belongs to the RuvA family. In terms of assembly, homotetramer. Forms an RuvA(8)-RuvB(12)-Holliday junction (HJ) complex. HJ DNA is sandwiched between 2 RuvA tetramers; dsDNA enters through RuvA and exits via RuvB. An RuvB hexamer assembles on each DNA strand where it exits the tetramer. Each RuvB hexamer is contacted by two RuvA subunits (via domain III) on 2 adjacent RuvB subunits; this complex drives branch migration. In the full resolvosome a probable DNA-RuvA(4)-RuvB(12)-RuvC(2) complex forms which resolves the HJ.

It is found in the cytoplasm. Functionally, the RuvA-RuvB-RuvC complex processes Holliday junction (HJ) DNA during genetic recombination and DNA repair, while the RuvA-RuvB complex plays an important role in the rescue of blocked DNA replication forks via replication fork reversal (RFR). RuvA specifically binds to HJ cruciform DNA, conferring on it an open structure. The RuvB hexamer acts as an ATP-dependent pump, pulling dsDNA into and through the RuvAB complex. HJ branch migration allows RuvC to scan DNA until it finds its consensus sequence, where it cleaves and resolves the cruciform DNA. This Maricaulis maris (strain MCS10) (Caulobacter maris) protein is Holliday junction branch migration complex subunit RuvA.